The sequence spans 516 residues: Oxysterol-binding protein-like protein 1 (516 aa).

2 disordered regions span residues 168 to 240 (PLGK…SQKS) and 459 to 501 (KQEI…EEGK). Over residues 178-187 (SRTTSSQSVA) the composition is skewed to polar residues. The residue at position 182 (Ser-182) is a Phosphoserine. A compositionally biased stretch (basic residues) spans 197–206 (TSKKKSSKKN). Over residues 218-238 (DRSSTAPSTAESNNEHLSSSQ) the composition is skewed to polar residues.

The protein belongs to the OSBP family.

The protein resides in the endoplasmic reticulum. This chain is Oxysterol-binding protein-like protein 1 (obp1), found in Schizosaccharomyces pombe (strain 972 / ATCC 24843) (Fission yeast).